A 167-amino-acid chain; its full sequence is Ribosome maturation factor RimM (167 aa).

The region spanning 92–166 is the PRC barrel domain; the sequence is DDEFYHADLI…RIVADPPEEQ (75 aa).

This sequence belongs to the RimM family. As to quaternary structure, binds ribosomal protein uS19.

It is found in the cytoplasm. An accessory protein needed during the final step in the assembly of 30S ribosomal subunit, possibly for assembly of the head region. Essential for efficient processing of 16S rRNA. May be needed both before and after RbfA during the maturation of 16S rRNA. It has affinity for free ribosomal 30S subunits but not for 70S ribosomes. The sequence is that of Ribosome maturation factor RimM from Paracoccus denitrificans (strain Pd 1222).